The chain runs to 298 residues: Homoserine kinase (298 aa).

79 to 89 (PIARGLGSSGA) contributes to the ATP binding site.

It belongs to the GHMP kinase family. Homoserine kinase subfamily.

It localises to the cytoplasm. The catalysed reaction is L-homoserine + ATP = O-phospho-L-homoserine + ADP + H(+). It functions in the pathway amino-acid biosynthesis; L-threonine biosynthesis; L-threonine from L-aspartate: step 4/5. Functionally, catalyzes the ATP-dependent phosphorylation of L-homoserine to L-homoserine phosphate. This Pyrobaculum islandicum (strain DSM 4184 / JCM 9189 / GEO3) protein is Homoserine kinase.